The sequence spans 105 residues: Histone H2A-like 1 (105 aa).

It belongs to the histone H2A family. The nucleosome is a histone octamer containing two molecules each of H2A, H2B, H3 and H4 assembled in one H3-H4 heterotetramer and two H2A-H2B heterodimers. May be incorporated into a proportion of nucleosomes, replacing one or more H2A molecules. Interacts with H2BC1/TH2B; preferentially dimerizes with H2BC1/TH2B to form nucleosomes. As to expression, testis-specific.

Its subcellular location is the nucleus. It localises to the chromosome. In terms of biological role, atypical histone H2A which can replace conventional H2A in some nucleosomes and may play a role during spermatogenesis. Nucleosomes wrap and compact DNA into chromatin, limiting DNA accessibility to the cellular machineries which require DNA as a template. Histones thereby play a central role in transcription regulation, DNA repair, DNA replication and chromosomal stability. DNA accessibility is regulated via a complex set of post-translational modifications of histones, also called histone code, and nucleosome remodeling. This is Histone H2A-like 1 from Mus musculus (Mouse).